We begin with the raw amino-acid sequence, 305 residues long: Ribonuclease Z (305 aa).

Residues His-61, His-63, Asp-65, His-66, His-141, Asp-209, and His-268 each coordinate Zn(2+). Asp-65 (proton acceptor) is an active-site residue.

It belongs to the RNase Z family. In terms of assembly, homodimer. Zn(2+) serves as cofactor.

The enzyme catalyses Endonucleolytic cleavage of RNA, removing extra 3' nucleotides from tRNA precursor, generating 3' termini of tRNAs. A 3'-hydroxy group is left at the tRNA terminus and a 5'-phosphoryl group is left at the trailer molecule.. Its function is as follows. Zinc phosphodiesterase, which displays some tRNA 3'-processing endonuclease activity. Probably involved in tRNA maturation, by removing a 3'-trailer from precursor tRNA. The polypeptide is Ribonuclease Z (Clostridioides difficile (strain 630) (Peptoclostridium difficile)).